We begin with the raw amino-acid sequence, 368 residues long: D-alanine--D-alanine ligase (368 aa).

One can recognise an ATP-grasp domain in the interval 151-358 (KKLLAAEGLP…YGTLVSTLVD (208 aa)). An ATP-binding site is contributed by 179 to 234 (RSRLHLPVFVKPARGGSSIGITRVAEWAALDDAIAHARRHDPKVIVESGIAGREVE). 3 residues coordinate Mg(2+): aspartate 313, glutamate 325, and asparagine 327.

The protein belongs to the D-alanine--D-alanine ligase family. It depends on Mg(2+) as a cofactor. Mn(2+) serves as cofactor.

It localises to the cytoplasm. It carries out the reaction 2 D-alanine + ATP = D-alanyl-D-alanine + ADP + phosphate + H(+). Its pathway is cell wall biogenesis; peptidoglycan biosynthesis. In terms of biological role, cell wall formation. This chain is D-alanine--D-alanine ligase, found in Rhodococcus opacus (strain B4).